Here is a 360-residue protein sequence, read N- to C-terminus: Uptake hydrogenase small subunit (360 aa).

The segment at residues 1–43 is a signal peptide (tat-type signal); it reads MVETFYEVMRRQGISRRSFLKYCSLTATSLGLGPSFLPQIAHA. [4Fe-4S] cluster contacts are provided by C60, C63, C158, C192, H230, C233, C258, and C264. The [3Fe-4S] cluster site is built by C273, C292, and C295.

It belongs to the [NiFe]/[NiFeSe] hydrogenase small subunit family. In terms of assembly, heterodimer of a large and a small subunit. Requires [4Fe-4S] cluster as cofactor. [3Fe-4S] cluster serves as cofactor. In terms of processing, predicted to be exported by the Tat system. The position of the signal peptide cleavage has been experimentally proven.

The protein localises to the cell membrane. It catalyses the reaction H2 + A = AH2. In terms of biological role, this enzyme recycles the H(2) produced by nitrogenase to increase the production of ATP and to protect nitrogenase against inhibition or damage by O(2) under carbon- or phosphate-limited conditions. The polypeptide is Uptake hydrogenase small subunit (hoxK) (Cupriavidus necator (strain ATCC 17699 / DSM 428 / KCTC 22496 / NCIMB 10442 / H16 / Stanier 337) (Ralstonia eutropha)).